The sequence spans 203 residues: MFKKYDSKNSIVLKSILSLGIIYSGSFGIYPKADASTQNSSSVQDKQLQKVEEVPNNSEKALVKKLYDRYSKDTINGKSNKSRNWVYSERPLNENQVRIHLEGTYTVAGRVYTPKRNITLNKEVVTLKELDHIIRFAHISYGLYMGEHLPKGNIVINTKNGGKYTLESHKELQKNRENVEINTDDIKNVTFELVKSVNDIEQV.

The sialic acid-binding motif stretch occupies residues 164-180 (YTLESHKELQKNRENVE).

This sequence belongs to the staphylococcal/streptococcal toxin family.

It localises to the secreted. Plays a role in the inhibition of the host innate immune system. Inhibits phagocytosis and killing by human neutrophils by interacting with multiple neutrophil surface glycoproteins in a sialic acid-dependent manner. The sequence is that of Enterotoxin-like toxin X from Staphylococcus aureus.